The primary structure comprises 1451 residues: Transcription elongation factor SPT6 (1451 aa).

Basic and acidic residues predominate over residues 1 to 12 (MEETGDSKLVPR). The interval 1–217 (MEETGDSKLV…EDDETRQRRI (217 aa)) is disordered. Positions 8 to 12 (KLVPR) match the Nuclear localization signal motif. Over residues 29 to 51 (EEEEGEDVFDSSEEDEDIDEDED) the composition is skewed to acidic residues. The segment covering 76-85 (SKKRRKHKRR) has biased composition (basic residues). The short motif at 77–85 (KKRRKHKRR) is the Nuclear localization signal element. Residues 88 to 100 (EEDDRLSEDDLDL) show a composition bias toward acidic residues. Phosphoserine is present on Ser94. Residues 120 to 125 (KRLKRV) carry the Nuclear localization signal motif. Residues Ser134, Ser136, Ser148, and Ser155 each carry the phosphoserine modification. Over residues 153–162 (FFSEDEEEEE) the composition is skewed to acidic residues. Residues 180 to 192 (HENRNRTADKGGI) show a composition bias toward basic and acidic residues. Positions 194 to 211 (DELDDFIEDDEFSDEDDE) are enriched in acidic residues. 2 positions are modified to phosphoserine: Ser206 and Ser295. An SH2 domain is found at 1257–1354 (PYYFPFNGRQ…RLLNEMTSSE (98 aa)).

Belongs to the SPT6 family. In terms of assembly, interacts with CTR9.

It is found in the nucleus. The protein resides in the chromosome. Its function is as follows. Histone H3-H4 chaperone that plays a role in maintenance of chromatin structure during RNA polymerase II transcription elongation thereby repressing transcription initiation from cryptic promoters. Mediates the reassembly of nucleosomes onto the promoters of at least a selected set of genes during repression; the nucleosome reassembly is essential for transcriptional repression. Essential for viability. The protein is Transcription elongation factor SPT6 (SPT6) of Saccharomyces cerevisiae (strain ATCC 204508 / S288c) (Baker's yeast).